The following is a 598-amino-acid chain: Aspartate--tRNA(Asp/Asn) ligase (598 aa).

An L-aspartate-binding site is contributed by glutamate 174. The aspartate stretch occupies residues 198-201 (QQLK). L-aspartate is bound at residue arginine 220. ATP-binding positions include 220-222 (RDE) and glutamine 229. Histidine 458 is an L-aspartate binding site. Residue glutamate 492 coordinates ATP. Arginine 499 provides a ligand contact to L-aspartate. 544-547 (GIDR) is a binding site for ATP.

This sequence belongs to the class-II aminoacyl-tRNA synthetase family. Type 1 subfamily. Homodimer.

It localises to the cytoplasm. It catalyses the reaction tRNA(Asx) + L-aspartate + ATP = L-aspartyl-tRNA(Asx) + AMP + diphosphate. Its function is as follows. Aspartyl-tRNA synthetase with relaxed tRNA specificity since it is able to aspartylate not only its cognate tRNA(Asp) but also tRNA(Asn). Reaction proceeds in two steps: L-aspartate is first activated by ATP to form Asp-AMP and then transferred to the acceptor end of tRNA(Asp/Asn). The chain is Aspartate--tRNA(Asp/Asn) ligase from Dehalococcoides mccartyi (strain CBDB1).